Here is a 149-residue protein sequence, read N- to C-terminus: Large ribosomal subunit protein bL9 (149 aa).

This sequence belongs to the bacterial ribosomal protein bL9 family.

Functionally, binds to the 23S rRNA. This Citrobacter koseri (strain ATCC BAA-895 / CDC 4225-83 / SGSC4696) protein is Large ribosomal subunit protein bL9.